Consider the following 451-residue polypeptide: MDTNRKRSLDEHDTGEESPGKLQIVEINDEEDITFTDNPYYKLVKSRDNSINLVPLVGCVMIKINDIKGVTDKVNKLLPKTSSKTNSTSCINIPIDSIPLNFLDDGNKYFNVSEVSILQVSHGNDMMNIDKYVDGSFDYIAVLCLKNSGRSVIMLNHCNKQHVMQDNFCLIFRSFYGINILTQIIGESVYLLVKLSPSDLFKIRWSSVIDSNRFMGKKFYIRNLQEDACIEKMKNMEKDIYKNIEFIIINSVLLEDLKSRLDITRELNHTIDKMFNHNNNTLFSDIIKLSEEIIDKDFKNMEKMSDSVLADVKQISKTKNKLRERLLKAAISSKEVEEILSDIPVIEEGTIKQFSLNQRAVYDHYKKVIYKNNSSLDLGCMNIEKSYMFNLYKVYGQNEYMITYILNLINRVKKGMDAIKSNLGDIYKYNIDNINLVVSERINKVISGESL.

Over residues 1–12 (MDTNRKRSLDEH) the composition is skewed to basic and acidic residues. Residues 1–20 (MDTNRKRSLDEHDTGEESPG) form a disordered region.

This sequence belongs to the poxviridae F11 protein family.

Its function is as follows. Stimulates increases in peripheral microtubule dynamics and may increase the motility of the infected cells, contributing to cell-to-cell spread of the virus. The protein is Protein F11 homolog of Fowlpox virus (strain NVSL) (FPV).